The sequence spans 391 residues: Chorismate synthase (391 aa).

Arg48 contributes to the NADP(+) binding site. FMN contacts are provided by residues 126–128 (RSS), Gly287, 302–306 (KPTSS), and Arg329.

This sequence belongs to the chorismate synthase family. FMNH2 is required as a cofactor.

The catalysed reaction is 5-O-(1-carboxyvinyl)-3-phosphoshikimate = chorismate + phosphate. The protein operates within metabolic intermediate biosynthesis; chorismate biosynthesis; chorismate from D-erythrose 4-phosphate and phosphoenolpyruvate: step 7/7. Catalyzes the anti-1,4-elimination of the C-3 phosphate and the C-6 proR hydrogen from 5-enolpyruvylshikimate-3-phosphate (EPSP) to yield chorismate, which is the branch point compound that serves as the starting substrate for the three terminal pathways of aromatic amino acid biosynthesis. This reaction introduces a second double bond into the aromatic ring system. The chain is Chorismate synthase from Sulfolobus acidocaldarius (strain ATCC 33909 / DSM 639 / JCM 8929 / NBRC 15157 / NCIMB 11770).